A 430-amino-acid polypeptide reads, in one-letter code: Adenylosuccinate synthetase (430 aa).

GTP-binding positions include 13-19 (GDEGKGK) and 41-43 (GHT). Asp14 serves as the catalytic Proton acceptor. Residues Asp14 and Gly41 each contribute to the Mg(2+) site. IMP contacts are provided by residues 14–17 (DEGK), 39–42 (NAGH), Thr130, Arg144, Gln225, Thr240, and Arg304. His42 serves as the catalytic Proton donor. 300–306 (ATTGRKR) is a substrate binding site. Residues Arg306, 332–334 (KLD), and 414–416 (STG) contribute to the GTP site.

This sequence belongs to the adenylosuccinate synthetase family. As to quaternary structure, homodimer. Mg(2+) serves as cofactor.

The protein localises to the cytoplasm. It carries out the reaction IMP + L-aspartate + GTP = N(6)-(1,2-dicarboxyethyl)-AMP + GDP + phosphate + 2 H(+). It participates in purine metabolism; AMP biosynthesis via de novo pathway; AMP from IMP: step 1/2. Its function is as follows. Plays an important role in the de novo pathway of purine nucleotide biosynthesis. Catalyzes the first committed step in the biosynthesis of AMP from IMP. This is Adenylosuccinate synthetase from Teredinibacter turnerae (strain ATCC 39867 / T7901).